Reading from the N-terminus, the 315-residue chain is Biotin synthase (315 aa).

The Radical SAM core domain maps to 39–266 (NSLQFATLLS…KSAIRLTAGR (228 aa)). The [4Fe-4S] cluster site is built by C54, C58, and C61. [2Fe-2S] cluster contacts are provided by C98, C129, C189, and R261.

Belongs to the radical SAM superfamily. Biotin synthase family. In terms of assembly, homodimer. The cofactor is [4Fe-4S] cluster. [2Fe-2S] cluster serves as cofactor.

The catalysed reaction is (4R,5S)-dethiobiotin + (sulfur carrier)-SH + 2 reduced [2Fe-2S]-[ferredoxin] + 2 S-adenosyl-L-methionine = (sulfur carrier)-H + biotin + 2 5'-deoxyadenosine + 2 L-methionine + 2 oxidized [2Fe-2S]-[ferredoxin]. It participates in cofactor biosynthesis; biotin biosynthesis; biotin from 7,8-diaminononanoate: step 2/2. Catalyzes the conversion of dethiobiotin (DTB) to biotin by the insertion of a sulfur atom into dethiobiotin via a radical-based mechanism. In Legionella pneumophila (strain Paris), this protein is Biotin synthase.